A 450-amino-acid polypeptide reads, in one-letter code: MELKGKRVLVVGLGESGLAMAKWLHRQGALVRVADSRDNPPNIDALQRVAPGAELVAGAFAEATFAGADFVALSPGVPKATPEIAALEIPLISEIELFADGVREQVPNSQIIAITGSNGKTTTTALTAHLLNGAGVPAIACGNISPSALDALMDAQDAGALPQVWVVELSSFQLETTHHLNAAAATVLNVSEDHLDRYEGSLANYAAAKSRVFQGKGVMVLNRDDDWSMANGRCGRKMVTFGLNAAPRGVDYGYADGAIWRGKDKLVAIDALKLSGLHNAANAMAALALCEAIGVDPLRLIEPLKGFSGLPHRVETVAEIGGVLYVDDSKGTNVGATLAAIEGMGRKVAIVLGGDGKGQDFSPLKPALEKHGRAVALIGRDAAAIGMALEGSGVPTRILGDMEAAVLWLAAQAQAGDCVLLSPACASLDMYRNYAHRAQAFIDAVEGLKS.

116–122 contacts ATP; the sequence is GSNGKTT.

It belongs to the MurCDEF family.

Its subcellular location is the cytoplasm. It carries out the reaction UDP-N-acetyl-alpha-D-muramoyl-L-alanine + D-glutamate + ATP = UDP-N-acetyl-alpha-D-muramoyl-L-alanyl-D-glutamate + ADP + phosphate + H(+). The protein operates within cell wall biogenesis; peptidoglycan biosynthesis. Cell wall formation. Catalyzes the addition of glutamate to the nucleotide precursor UDP-N-acetylmuramoyl-L-alanine (UMA). In Dechloromonas aromatica (strain RCB), this protein is UDP-N-acetylmuramoylalanine--D-glutamate ligase.